The chain runs to 310 residues: UDP-N-acetylenolpyruvoylglucosamine reductase (310 aa).

The FAD-binding PCMH-type domain occupies 35-203; the sequence is RAGGAAEALV…TRVRFALRKG (169 aa). R183 is a catalytic residue. The active-site Proton donor is the S232. E302 is an active-site residue.

Belongs to the MurB family. Requires FAD as cofactor.

Its subcellular location is the cytoplasm. The enzyme catalyses UDP-N-acetyl-alpha-D-muramate + NADP(+) = UDP-N-acetyl-3-O-(1-carboxyvinyl)-alpha-D-glucosamine + NADPH + H(+). It functions in the pathway cell wall biogenesis; peptidoglycan biosynthesis. Cell wall formation. The sequence is that of UDP-N-acetylenolpyruvoylglucosamine reductase from Myxococcus xanthus (strain DK1622).